Here is a 328-residue protein sequence, read N- to C-terminus: D-cysteine desulfhydrase (328 aa).

The residue at position 51 (lysine 51) is an N6-(pyridoxal phosphate)lysine.

Belongs to the ACC deaminase/D-cysteine desulfhydrase family. In terms of assembly, homodimer. The cofactor is pyridoxal 5'-phosphate.

The catalysed reaction is D-cysteine + H2O = hydrogen sulfide + pyruvate + NH4(+) + H(+). Functionally, catalyzes the alpha,beta-elimination reaction of D-cysteine and of several D-cysteine derivatives. It could be a defense mechanism against D-cysteine. This is D-cysteine desulfhydrase from Escherichia coli O6:H1 (strain CFT073 / ATCC 700928 / UPEC).